A 120-amino-acid polypeptide reads, in one-letter code: Large ribosomal subunit protein bL20 (120 aa).

The protein belongs to the bacterial ribosomal protein bL20 family.

Functionally, binds directly to 23S ribosomal RNA and is necessary for the in vitro assembly process of the 50S ribosomal subunit. It is not involved in the protein synthesizing functions of that subunit. The sequence is that of Large ribosomal subunit protein bL20 from Ureaplasma parvum serovar 3 (strain ATCC 27815 / 27 / NCTC 11736).